We begin with the raw amino-acid sequence, 472 residues long: Carboxypeptidase Q (472 aa).

The first 20 residues, 1–20 (MKFLIFAFFGGVHLLSLCSG), serve as a signal peptide directing secretion. A propeptide spanning residues 21–44 (KAIYKNGISKRTFEEIKEEIASYG) is cleaved from the precursor. N-linked (GlcNAc...) asparagine glycans are attached at residues Asn61 and Asn179. His290 and Asp302 together coordinate Zn(2+). The active-site Nucleophile is Glu336. Glu337 is a binding site for Zn(2+). 2 N-linked (GlcNAc...) asparagine glycosylation sites follow: Asn353 and Asn356. Zn(2+) is bound at residue Asp364. Residue Asn396 is glycosylated (N-linked (GlcNAc...) asparagine). Residue His434 coordinates Zn(2+).

This sequence belongs to the peptidase M28 family. Homodimer. The monomeric form is inactive while the homodimer is active. Post-translationally, N-glycosylated. The secreted form is modified by hybrid or complex type oligosaccharide chains.

The protein localises to the endoplasmic reticulum. Its subcellular location is the golgi apparatus. It is found in the lysosome. It localises to the secreted. In terms of biological role, carboxypeptidase that may play an important role in the hydrolysis of circulating peptides. Catalyzes the hydrolysis of dipeptides with unsubstituted terminals into amino acids. May play a role in the liberation of thyroxine hormone from its thyroglobulin (Tg) precursor. This Pongo abelii (Sumatran orangutan) protein is Carboxypeptidase Q (CPQ).